The following is a 353-amino-acid chain: Probable peptidoglycan glycosyltransferase FtsW (353 aa).

Transmembrane regions (helical) follow at residues 26 to 46, 53 to 73, 115 to 135, 137 to 157, 162 to 182, 242 to 262, 288 to 308, and 314 to 334; these read IFYF…PMSF, LILI…KSVH, FWGF…LLAE, DLGT…LSGV, FFII…FEPY, IIGE…IFFI, IGLW…GILP, and LPLI…ICIL.

This sequence belongs to the SEDS family. FtsW subfamily.

It localises to the cell inner membrane. It carries out the reaction [GlcNAc-(1-&gt;4)-Mur2Ac(oyl-L-Ala-gamma-D-Glu-L-Lys-D-Ala-D-Ala)](n)-di-trans,octa-cis-undecaprenyl diphosphate + beta-D-GlcNAc-(1-&gt;4)-Mur2Ac(oyl-L-Ala-gamma-D-Glu-L-Lys-D-Ala-D-Ala)-di-trans,octa-cis-undecaprenyl diphosphate = [GlcNAc-(1-&gt;4)-Mur2Ac(oyl-L-Ala-gamma-D-Glu-L-Lys-D-Ala-D-Ala)](n+1)-di-trans,octa-cis-undecaprenyl diphosphate + di-trans,octa-cis-undecaprenyl diphosphate + H(+). It participates in cell wall biogenesis; peptidoglycan biosynthesis. Functionally, peptidoglycan polymerase that is essential for cell division. The polypeptide is Probable peptidoglycan glycosyltransferase FtsW (Buchnera aphidicola subsp. Schizaphis graminum (strain Sg)).